Consider the following 444-residue polypeptide: Beta-D-glucosyl crocetin beta-1,6-glucosyltransferase (444 aa).

The active-site Proton acceptor is the histidine 9. Histidine 9 contacts an anthocyanidin. Residue aspartate 108 is the Charge relay of the active site. Threonine 130, alanine 319, glutamine 321, histidine 336, tryptophan 339, asparagine 340, serine 341, glutamate 344, aspartate 360, and glutamine 361 together coordinate UDP-alpha-D-glucose.

This sequence belongs to the UDP-glycosyltransferase family. Ubiquitous.

It carries out the reaction beta-D-glucosyl crocetin + UDP-alpha-D-glucose = beta-D-gentiobiosyl crocetin + UDP + H(+). The catalysed reaction is bis(beta-D-glucosyl) crocetin + UDP-alpha-D-glucose = beta-D-gentiobiosyl beta-D-glucosyl crocetin + UDP + H(+). It catalyses the reaction beta-D-gentiobiosyl beta-D-glucosyl crocetin + UDP-alpha-D-glucose = bis(beta-D-gentiobiosyl) crocetin + UDP + H(+). In terms of biological role, glucosyltransferase catalyzing the beta 1-6 glucosylation of the sugar moiety of crocetin glucosyl esters to produce crocetin gentiobiosyl esters. Weak activity toward curcumin glucosides, but no activity with flavonoid glucosides, coumarin glucosides, 4-nitrophenyl glucoside or crocetin. Involved with UGT75L6 in sequential glycosylation of crocetin to crocin (bis(beta-D-gentiobiosyl) crocetin). This Gardenia jasminoides (Cape jasmine) protein is Beta-D-glucosyl crocetin beta-1,6-glucosyltransferase (UGT94E5).